The primary structure comprises 118 residues: Small ribosomal subunit protein uS13 (118 aa).

A disordered region spans residues 94–118; the sequence is GLPVRGQRTKTNARTRKGPRKPIKK.

It belongs to the universal ribosomal protein uS13 family. As to quaternary structure, part of the 30S ribosomal subunit. Forms a loose heterodimer with protein S19. Forms two bridges to the 50S subunit in the 70S ribosome.

Located at the top of the head of the 30S subunit, it contacts several helices of the 16S rRNA. In the 70S ribosome it contacts the 23S rRNA (bridge B1a) and protein L5 of the 50S subunit (bridge B1b), connecting the 2 subunits; these bridges are implicated in subunit movement. Contacts the tRNAs in the A and P-sites. This is Small ribosomal subunit protein uS13 from Tolumonas auensis (strain DSM 9187 / NBRC 110442 / TA 4).